The primary structure comprises 191 residues: Calcium-activated potassium channel subunit beta-1 (191 aa).

Topologically, residues 1-18 (MGKKLVMAQKRGETRALC) are cytoplasmic. The helical transmembrane segment at 19 to 39 (LGVAMVVCAAITYYVLGTTVL) threads the bilayer. The Extracellular portion of the chain corresponds to 40-155 (PLYQKSVWTQ…VVYQRLYGPQ (116 aa)). N80 and N142 each carry an N-linked (GlcNAc...) asparagine glycan. Residues 156–176 (VLLFSFFWPTFLLTGGLLLIA) traverse the membrane as a helical segment. At 177 to 191 (MVKLNRSLSILAAQK) the chain is on the cytoplasmic side.

Belongs to the KCNMB (TC 8.A.14.1) family. KCNMB1 subfamily. As to quaternary structure, interacts with KCNMA1 tetramer. There are probably 4 molecules of KCMNB1 per KCNMA1 tetramer. N-glycosylated. In terms of tissue distribution, expressed in many tissues containing smooth muscles. In brain and heart, it is not expressed except in the vasculature, such as cerebral arteries, aorta and corona arteries.

The protein localises to the membrane. Regulatory subunit of the calcium activated potassium KCNMA1 (maxiK) channel. Modulates the calcium sensitivity and gating kinetics of KCNMA1, thereby contributing to KCNMA1 channel diversity. Increases the apparent Ca(2+)/voltage sensitivity of the KCNMA1 channel. It also modifies KCNMA1 channel kinetics and alters its pharmacological properties. It slows down the activation and the deactivation kinetics of the channel. Acts as a negative regulator of smooth muscle contraction by enhancing the calcium sensitivity to KCNMA1. Its presence is also a requirement for internal binding of the KCNMA1 channel opener dehydrosoyasaponin I (DHS-1) triterpene glycoside and for external binding of the agonist hormone 17-beta-estradiol (E2). Increases the binding activity of charybdotoxin (CTX) toxin to KCNMA1 peptide blocker by increasing the CTX association rate and decreasing the dissociation rate. The sequence is that of Calcium-activated potassium channel subunit beta-1 (Kcnmb1) from Mus musculus (Mouse).